Reading from the N-terminus, the 317-residue chain is Ferrochelatase (317 aa).

Fe cation contacts are provided by His-187 and Glu-268.

It belongs to the ferrochelatase family.

It is found in the cytoplasm. It carries out the reaction heme b + 2 H(+) = protoporphyrin IX + Fe(2+). Its pathway is porphyrin-containing compound metabolism; protoheme biosynthesis; protoheme from protoporphyrin-IX: step 1/1. Its function is as follows. Catalyzes the ferrous insertion into protoporphyrin IX. This chain is Ferrochelatase, found in Campylobacter concisus (strain 13826).